We begin with the raw amino-acid sequence, 288 residues long: Probable anion import ATP-binding protein HVO_1886 (288 aa).

The segment covering 1–18 (MTTERPDAGDSGSEKPDE) has biased composition (basic and acidic residues). A disordered region spans residues 1–33 (MTTERPDAGDSGSEKPDETAAPDPAANGARRSK). Positions 36–282 (LAARSLGHGF…PDDDRVRQFV (247 aa)) constitute an ABC transporter domain. 68–75 (GPSGTGKT) contacts ATP.

The protein belongs to the ABC transporter superfamily. As to quaternary structure, the complex is composed of two ATP-binding proteins (HVO_1886), two transmembrane proteins (HVO_1887) and a solute-binding protein (HVO_1888).

Its subcellular location is the cell membrane. In terms of biological role, part of an ABC transporter complex involved in anions import. Responsible for energy coupling to the transport system. This is Probable anion import ATP-binding protein HVO_1886 from Haloferax volcanii (strain ATCC 29605 / DSM 3757 / JCM 8879 / NBRC 14742 / NCIMB 2012 / VKM B-1768 / DS2) (Halobacterium volcanii).